The chain runs to 403 residues: NADH-quinone oxidoreductase subunit D (403 aa).

The protein belongs to the complex I 49 kDa subunit family. NDH-1 is composed of 14 different subunits. Subunits NuoB, C, D, E, F, and G constitute the peripheral sector of the complex.

The protein resides in the cell inner membrane. It carries out the reaction a quinone + NADH + 5 H(+)(in) = a quinol + NAD(+) + 4 H(+)(out). Its function is as follows. NDH-1 shuttles electrons from NADH, via FMN and iron-sulfur (Fe-S) centers, to quinones in the respiratory chain. The immediate electron acceptor for the enzyme in this species is believed to be ubiquinone. Couples the redox reaction to proton translocation (for every two electrons transferred, four hydrogen ions are translocated across the cytoplasmic membrane), and thus conserves the redox energy in a proton gradient. This Ruegeria sp. (strain TM1040) (Silicibacter sp.) protein is NADH-quinone oxidoreductase subunit D.